A 754-amino-acid chain; its full sequence is Polyadenylate-binding protein, cytoplasmic and nuclear (754 aa).

Over residues 1 to 25 the composition is skewed to polar residues; it reads MSAEVSTTPAADNVNGTPEATNAAA. The tract at residues 1 to 52 is disordered; the sequence is MSAEVSTTPAADNVNGTPEATNAAATSAPEVTAVESSSPTSPNNNNQPHSAS. The span at 36 to 46 shows a compositional bias: low complexity; sequence SSSPTSPNNNN. RRM domains follow at residues 51-129, 139-216, 232-309, and 335-465; these read ASLY…WSQR, GNVF…HHIS, TNIY…RAQK, and VNLY…LAQR. Disordered regions lie at residues 365–420 and 595–648; these read KVMR…KKSD and RGGG…EEAP. Basic and acidic residues predominate over residues 366-420; sequence VMRDSTPAERTETPDSEKEKEVNKENEKKEDEEKAAEEKPKESDEEKKDETKKSD. A compositionally biased stretch (gly residues) spans 610 to 633; that stretch reads GMRGPGYQGRGGPQGGPRPQGGRG. Residues 634 to 648 show a composition bias toward low complexity; that stretch reads QNAAAQPAAGREEAP. The PABC domain maps to 649 to 726; it reads AGALTAQALN…ALSVYDEYMK (78 aa). The segment at 729–754 is disordered; it reads GEGEAPADADKPKEAAKETATEENKS.

The protein belongs to the polyadenylate-binding protein type-1 family.

The protein resides in the cytoplasm. Its subcellular location is the nucleus. In terms of biological role, binds the poly(A) tail of mRNA. Appears to be an important mediator of the multiple roles of the poly(A) tail in mRNA biogenesis, stability and translation. In the nucleus, involved in both mRNA cleavage and polyadenylation. Is also required for efficient mRNA export to the cytoplasm. Acts in concert with a poly(A)-specific nuclease (PAN) to affect poly(A) tail shortening, which may occur concomitantly with either nucleocytoplasmic mRNA transport or translational initiation. In the cytoplasm, stimulates translation initiation and regulates mRNA decay through translation termination-coupled poly(A) shortening, probably mediated by PAN. This Aspergillus clavatus (strain ATCC 1007 / CBS 513.65 / DSM 816 / NCTC 3887 / NRRL 1 / QM 1276 / 107) protein is Polyadenylate-binding protein, cytoplasmic and nuclear (pab1).